The primary structure comprises 140 residues: Large ribosomal subunit protein uL14 (140 aa).

Belongs to the universal ribosomal protein uL14 family.

In Aedes aegypti (Yellowfever mosquito), this protein is Large ribosomal subunit protein uL14 (RpL23-A).